Here is a 171-residue protein sequence, read N- to C-terminus: MVKKIRLLGDPVLRKKSKNVERVDETTISLIKDLFETMYATDGIGLAAPQIGVSLRIFVMDDGKPRVFINPEIIYKSEEKEIAEEGCLSVPEVFEDVERSKEVTVRYMNEHGEEVEESFVDYSARVVQHEYDHLQGVLFIDLIPSSRRFAIRKKLIEIVRQSQKTDYAERP.

2 residues coordinate Fe cation: C87 and H129. Residue E130 is part of the active site. Residue H133 participates in Fe cation binding.

It belongs to the polypeptide deformylase family. Fe(2+) serves as cofactor.

It catalyses the reaction N-terminal N-formyl-L-methionyl-[peptide] + H2O = N-terminal L-methionyl-[peptide] + formate. Removes the formyl group from the N-terminal Met of newly synthesized proteins. Requires at least a dipeptide for an efficient rate of reaction. N-terminal L-methionine is a prerequisite for activity but the enzyme has broad specificity at other positions. This Pseudothermotoga lettingae (strain ATCC BAA-301 / DSM 14385 / NBRC 107922 / TMO) (Thermotoga lettingae) protein is Peptide deformylase.